A 422-amino-acid polypeptide reads, in one-letter code: Gamma-glutamyl phosphate reductase (422 aa).

Belongs to the gamma-glutamyl phosphate reductase family.

The protein resides in the cytoplasm. The enzyme catalyses L-glutamate 5-semialdehyde + phosphate + NADP(+) = L-glutamyl 5-phosphate + NADPH + H(+). It participates in amino-acid biosynthesis; L-proline biosynthesis; L-glutamate 5-semialdehyde from L-glutamate: step 2/2. Functionally, catalyzes the NADPH-dependent reduction of L-glutamate 5-phosphate into L-glutamate 5-semialdehyde and phosphate. The product spontaneously undergoes cyclization to form 1-pyrroline-5-carboxylate. This is Gamma-glutamyl phosphate reductase from Nitrosomonas europaea (strain ATCC 19718 / CIP 103999 / KCTC 2705 / NBRC 14298).